Reading from the N-terminus, the 349-residue chain is MTTVLAIETSCDETAVAIVNNRKVCSSIVTSQIPVHQQYGGVVPEVASRQHLETINVAIAQALEQAQLDWGQIDAIAATCAPGLLGALLVGLTAAKTLAMVHNKPFLGVHHLEGHIYATYLSESSLNPPFLSLLVSGGHTSLIFVKDCGNYETLGQTRDDAAGEAFDKVARLLKLGYPGGPVIDKLAQQGNPQAFALPEGKVSLPGGGFHRYDASFSGLKTAVLRLVQQLEKDGEQVPVADVAASFQETVARSLTKRAIACALDYGLDTIAIGGGVAANSGLRKNLQAAAVKHNLRVLFPPLKFCTDNAAMIGCAAADHLSHGHTSPLTLGVESRLALTQVMKLYHPLE.

Residues histidine 111 and histidine 115 each coordinate Fe cation. Residues 134 to 138 (LVSGG), aspartate 167, glycine 180, aspartate 184, and asparagine 279 contribute to the substrate site. Aspartate 307 serves as a coordination point for Fe cation.

The protein belongs to the KAE1 / TsaD family. It depends on Fe(2+) as a cofactor.

It localises to the cytoplasm. The enzyme catalyses L-threonylcarbamoyladenylate + adenosine(37) in tRNA = N(6)-L-threonylcarbamoyladenosine(37) in tRNA + AMP + H(+). In terms of biological role, required for the formation of a threonylcarbamoyl group on adenosine at position 37 (t(6)A37) in tRNAs that read codons beginning with adenine. Is involved in the transfer of the threonylcarbamoyl moiety of threonylcarbamoyl-AMP (TC-AMP) to the N6 group of A37, together with TsaE and TsaB. TsaD likely plays a direct catalytic role in this reaction. The sequence is that of tRNA N6-adenosine threonylcarbamoyltransferase from Nostoc punctiforme (strain ATCC 29133 / PCC 73102).